Reading from the N-terminus, the 1726-residue chain is Protein NLRC5 (1726 aa).

The NACHT domain maps to 207-537; the sequence is RVVMLSGQAG…THLTIQEFMA (331 aa). An ATP-binding site is contributed by 213–220; it reads GQAGSGKT. 18 LRR repeats span residues 879–902, 904–925, 1002–1025, 1026–1048, 1103–1126, 1128–1155, 1212–1235, 1351–1374, 1387–1411, 1421–1443, 1447–1468, 1502–1525, 1532–1553, 1560–1580, 1588–1609, 1616–1637, 1642–1662, and 1670–1691; these read LTVLNLSHNALGNRGLKKLLEHLP, LDTIQEINVSDNGVDMDGVVLL, NLDFSHGTLKDESTEKLLKFLPNM, ASLNLLNLSHIQMSTDSALLLVQ, CHHLTDLDLSSNFLKDEDVKTFVQ, LPKLQISGSVSLNNNNLTEVGVLYLLSL, LNSVQTLELRNNSFSADTIKYLIT, AEFLSSVLPSLKNLKILSLSSKGE, AQKHLEQLSLAHHVIKDRGAAVLGN, SLSLLKCLDWTATGGRDLVRGLV, SLEEIRLDSIELDEESIDCFAQ, LIELEEIELIGLRMGDRGVEELVK, RLRKINLSENRVSDHAGEMLVK, ALQQIHLFRNNLGHSSAAVLG, ELTELDLSENQMESKGCSSVCE, ALKKLHLTSIGTSDLVNVASCL, SIEDISLSWNNCENDVVLKLA, and KLKRLDLEANNINTSGAMALAT.

This sequence belongs to the NLRP family.

The protein resides in the cytoplasm. Its function is as follows. Probable regulator of the NF-kappa-B and type I interferon signaling pathways. May also regulate the type II interferon signaling pathway. Plays a role in homeostatic control of innate immunity and in antiviral defense mechanisms. This Ictalurus punctatus (Channel catfish) protein is Protein NLRC5 (nlrc5).